A 506-amino-acid chain; its full sequence is NAD(P)H-quinone oxidoreductase chain 4, chloroplastic (506 aa).

14 consecutive transmembrane segments (helical) span residues 5 to 25 (FPLL…IPFL), 35 to 55 (WYTL…FIYK), 88 to 108 (MPLI…AWPI), 114 to 134 (LFYF…LSQD), 135 to 155 (ILLF…LLSL), 168 to 188 (FILY…TMAF), 209 to 229 (ALEI…LPAF), 243 to 263 (HYST…YGLI), 275 to 295 (VIFS…GALT), 309 to 329 (SSIS…DLGL), 331 to 351 (GAMM…FLAG), 386 to 406 (SLAL…LGFL), 415 to 435 (FIAL…IYLL), and 463 to 483 (IFIM…PNLT).

This sequence belongs to the complex I subunit 4 family.

Its subcellular location is the plastid. The protein resides in the chloroplast thylakoid membrane. It carries out the reaction a plastoquinone + NADH + (n+1) H(+)(in) = a plastoquinol + NAD(+) + n H(+)(out). It catalyses the reaction a plastoquinone + NADPH + (n+1) H(+)(in) = a plastoquinol + NADP(+) + n H(+)(out). The chain is NAD(P)H-quinone oxidoreductase chain 4, chloroplastic from Chaetosphaeridium globosum (Charophycean green alga).